The chain runs to 158 residues: MRKRAAKKRPLLPDPRFNDQLVTRFVNNLMWDGKKSTAFKVFYDAMDIVEAKKQDQEKSSVDIWKDALTNVMPHVEVRSRRVGGATFQIPMQIRPDRKISMAMKWMILYSRRRNEKSMAQKLASEVLAAAKEEGAAVKKRMDTHKMAEANKAFSHFRF.

Belongs to the universal ribosomal protein uS7 family. In terms of assembly, part of the 30S ribosomal subunit. Contacts proteins S9 and S11.

Functionally, one of the primary rRNA binding proteins, it binds directly to 16S rRNA where it nucleates assembly of the head domain of the 30S subunit. Is located at the subunit interface close to the decoding center, probably blocks exit of the E-site tRNA. The sequence is that of Small ribosomal subunit protein uS7 from Flavobacterium psychrophilum (strain ATCC 49511 / DSM 21280 / CIP 103535 / JIP02/86).